The primary structure comprises 600 residues: Proline--tRNA ligase (600 aa).

It belongs to the class-II aminoacyl-tRNA synthetase family. ProS type 1 subfamily. Homodimer.

Its subcellular location is the cytoplasm. It catalyses the reaction tRNA(Pro) + L-proline + ATP = L-prolyl-tRNA(Pro) + AMP + diphosphate. Functionally, catalyzes the attachment of proline to tRNA(Pro) in a two-step reaction: proline is first activated by ATP to form Pro-AMP and then transferred to the acceptor end of tRNA(Pro). As ProRS can inadvertently accommodate and process non-cognate amino acids such as alanine and cysteine, to avoid such errors it has two additional distinct editing activities against alanine. One activity is designated as 'pretransfer' editing and involves the tRNA(Pro)-independent hydrolysis of activated Ala-AMP. The other activity is designated 'posttransfer' editing and involves deacylation of mischarged Ala-tRNA(Pro). The misacylated Cys-tRNA(Pro) is not edited by ProRS. This chain is Proline--tRNA ligase, found in Synechococcus sp. (strain RCC307).